Reading from the N-terminus, the 706-residue chain is Gamma-adducin (706 aa).

The span at 1–11 (MSSDTSPAVVT) shows a compositional bias: low complexity. The segment at 1-23 (MSSDTSPAVVTTPPPPSMPHKER) is disordered. Ser2 carries the post-translational modification N-acetylserine. Ser31, Ser42, Ser64, Ser402, Ser414, Ser423, Ser442, and Ser461 each carry phosphoserine. Disordered regions lie at residues 471–495 (AEDS…VPLN), 534–556 (PPST…PFSH), 574–610 (QGLD…RLEE), and 651–706 (TSTT…KVEA). A Glycyl lysine isopeptide (Lys-Gly) (interchain with G-Cter in SUMO2) cross-link involves residue Lys484. Phosphoserine occurs at positions 583, 585, and 590. Low complexity-rich tracts occupy residues 590–605 (SVSQ…QSVP) and 651–662 (TSTTIENIEITI). A phosphoserine mark is found at Ser673, Ser677, Ser679, Ser681, and Ser683. Basic residues predominate over residues 682–706 (PSKKKKKFRTPSFLKKNKKKEKVEA). An interaction with calmodulin region spans residues 684–701 (KKKKKFRTPSFLKKNKKK).

It belongs to the aldolase class II family. Adducin subfamily. Heterodimer of an alpha and a gamma subunit. In terms of processing, sumoylated. Proteolytically cleaved by asparagine endopeptidase (AEP) into 2 fragments. Overexpression of the 1-357 fragment induces neuronal apoptosis, and overexpression of either 1-357 or 358-706 fragment increases the degeneration of dendritic spines. Overexpression of the 1-357 fragment impairs neurite outgrowth by downregulating the expression of Rac2, and induces synaptic dysfunction and cognitive impairments in tau P301S transgenic mice, a mouse model for Alzheimer disease (AD). As to expression, cleavage fragment 1-357 is expressed in the brain and the expression increases with age (at protein level). The fragment is expressed in the cortex, hippocampal CA1 region and hippocampal dentate gyrus in tau P301S transgenic mice, a mouse model for Alzheimer disease (AD) (at protein level). The fragment is only weakly expressed in non-transgenic mouse brain sections (at protein level).

The protein localises to the cytoplasm. The protein resides in the cytoskeleton. It localises to the cell membrane. Its function is as follows. Membrane-cytoskeleton-associated protein that promotes the assembly of the spectrin-actin network. Plays a role in actin filament capping. Binds to calmodulin. Involved in myogenic reactivity of the renal afferent arteriole (Af-art), renal interlobular arteries and middle cerebral artery (MCA) to increased perfusion pressure. Involved in regulation of potassium channels in the vascular smooth muscle cells (VSMCs) of the Af-art and MCA ex vivo. Involved in regulation of glomerular capillary pressure, glomerular filtration rate (GFR) and glomerular nephrin expression in response to hypertension. Involved in renal blood flow (RBF) autoregulation. Plays a role in podocyte structure and function. Regulates globular monomer actin (G-actin) and filamentous polymer actin (F-actin) ratios in the primary podocytes affecting actin cytoskeleton organization. Regulates expression of synaptopodin, RhoA, Rac1 and CDC42 in the renal cortex and the primary podocytes. Regulates expression of nephrin in the glomeruli and in the primary podocytes, expression of nephrin and podocinin in the renal cortex, and expression of focal adhesion proteins integrin alpha-3 and integrin beta-1 in the glomeruli. Involved in cell migration and cell adhesion of podocytes, and in podocyte foot process effacement. Regulates expression of profibrotics markers MMP2, MMP9, TGF beta-1, tubular tight junction protein E-cadherin, and mesenchymal markers vimentin and alpha-SMA. Promotes the growth of neurites. The sequence is that of Gamma-adducin (Add3) from Mus musculus (Mouse).